We begin with the raw amino-acid sequence, 375 residues long: MVVIGEHRHTQVTVDLQAIKTNISNEMAQKDELTELWAVVKANGYGHGIIQVAQAAKEAGATGFCVAILDEALALRAAGFAEPILVLGITEPEYAPLVAEKDISLAVGTQDWLTTAAAILAANQVTTPLHVHLALDTGMGRIGFQTPEELATAVTTLRQPQSPFDFEGIFTHFATADQADDTYFTHQLNNWKHLIAVVDELPRYVHVSNSATSLWHQACNGNMVRFGVALYGLNPSGRELSAPYPLQPALSLTARLTFVKRLARGKSVSYGATYTAAQDEWIGTVPIGYADGYERRLQGFHVLVDGEFCEIVGRVCMDQLMVRLPHEVPVGAKVTLVGTDGARTISLQDIADYCGTIHYEIACGLAPRVPRVYID.

The active-site Proton acceptor; specific for D-alanine is Lys-41. Lys-41 carries the N6-(pyridoxal phosphate)lysine modification. Arg-141 is a binding site for substrate. Tyr-270 (proton acceptor; specific for L-alanine) is an active-site residue. Met-317 contacts substrate.

It belongs to the alanine racemase family. Requires pyridoxal 5'-phosphate as cofactor.

It catalyses the reaction L-alanine = D-alanine. It functions in the pathway amino-acid biosynthesis; D-alanine biosynthesis; D-alanine from L-alanine: step 1/1. In terms of biological role, catalyzes the interconversion of L-alanine and D-alanine. May also act on other amino acids. The sequence is that of Alanine racemase (alr) from Lactiplantibacillus plantarum (strain ATCC BAA-793 / NCIMB 8826 / WCFS1) (Lactobacillus plantarum).